Here is a 341-residue protein sequence, read N- to C-terminus: Serpentine receptor class epsilon-12 (341 aa).

Helical transmembrane passes span 30 to 50 (TAFY…LFSA), 57 to 77 (FTLV…AIIV), 101 to 121 (AMTF…FSIL), 140 to 160 (YISY…AILL), 167 to 187 (IFVV…NQFL), 230 to 250 (LNFI…SVLF), and 262 to 282 (ICSL…PQIM).

The protein belongs to the nematode receptor-like protein sre family.

The protein localises to the membrane. The protein is Serpentine receptor class epsilon-12 (sre-12) of Caenorhabditis elegans.